The following is a 116-amino-acid chain: MTRVKRGYVARKRRKNILTLTSGFQGTHSKLFRTANQQGMRALASSHRDRGKRKRNLRRLWITRVNAAARDNGISYNKLIEYLYKKKILLNRKILAQIAILDKFCFSTIIKNIITE.

It belongs to the bacterial ribosomal protein bL20 family.

It localises to the plastid. The protein localises to the chloroplast. Binds directly to 23S ribosomal RNA and is necessary for the in vitro assembly process of the 50S ribosomal subunit. It is not involved in the protein synthesizing functions of that subunit. The protein is Large ribosomal subunit protein bL20c (rpl20) of Marchantia polymorpha (Common liverwort).